Consider the following 211-residue polypeptide: Testis-expressed protein 35 (211 aa).

Residues 47–111 (GGTKELKNEL…MDVLINIQKN (65 aa)) are a coiled coil.

This is Testis-expressed protein 35 (Tex35) from Bos taurus (Bovine).